The chain runs to 140 residues: Large ribosomal subunit protein uL22 (140 aa).

The protein belongs to the universal ribosomal protein uL22 family. Part of the 50S ribosomal subunit.

This protein binds specifically to 23S rRNA; its binding is stimulated by other ribosomal proteins, e.g. L4, L17, and L20. It is important during the early stages of 50S assembly. It makes multiple contacts with different domains of the 23S rRNA in the assembled 50S subunit and ribosome. In terms of biological role, the globular domain of the protein is located near the polypeptide exit tunnel on the outside of the subunit, while an extended beta-hairpin is found that lines the wall of the exit tunnel in the center of the 70S ribosome. This is Large ribosomal subunit protein uL22 from Parafrankia sp. (strain EAN1pec).